The primary structure comprises 573 residues: Phosphoenolpyruvate-protein phosphotransferase (573 aa).

The active-site Tele-phosphohistidine intermediate is H190. Residues R297 and R333 each contribute to the phosphoenolpyruvate site. Mg(2+)-binding residues include E432 and D456. Residues 455-456 and R466 each bind phosphoenolpyruvate; that span reads ND. C503 acts as the Proton donor in catalysis.

This sequence belongs to the PEP-utilizing enzyme family. As to quaternary structure, homodimer. Requires Mg(2+) as cofactor.

The protein resides in the cytoplasm. It catalyses the reaction L-histidyl-[protein] + phosphoenolpyruvate = N(pros)-phospho-L-histidyl-[protein] + pyruvate. Its function is as follows. General (non sugar-specific) component of the phosphoenolpyruvate-dependent sugar phosphotransferase system (sugar PTS). This major carbohydrate active-transport system catalyzes the phosphorylation of incoming sugar substrates concomitantly with their translocation across the cell membrane. Enzyme I transfers the phosphoryl group from phosphoenolpyruvate (PEP) to the phosphoryl carrier protein (HPr). This Priestia megaterium (Bacillus megaterium) protein is Phosphoenolpyruvate-protein phosphotransferase (ptsI).